The primary structure comprises 540 residues: Tyrosinase (540 aa).

The signal sequence occupies residues 1–19; the sequence is MKSLFLSAVLLQFFETCWS. At 20–480 the chain is on the lumenal, melanosome side; it reads QFPRPCANSE…LQQAQQIWQW (461 aa). Asn87 is a glycosylation site (N-linked (GlcNAc...) asparagine). Residues His182, His205, and His214 each contribute to the Cu cation site. N-linked (GlcNAc...) asparagine glycans are attached at residues Asn233, Asn293, and Asn340. Residues His366 and His370 each contribute to the Cu cation site. Asn374 carries an N-linked (GlcNAc...) asparagine glycan. Residue His393 participates in Cu cation binding. A helical transmembrane segment spans residues 481-501; that stretch reads LLGAGILGALIATIVAAVIVF. The Cytoplasmic segment spans residues 502 to 540; sequence ARRKRRRNQKRKRAPSFGERQPLLQSSSEEGSSSYQTTL. The disordered stretch occupies residues 511 to 540; that stretch reads KRKRAPSFGERQPLLQSSSEEGSSSYQTTL. Over residues 527–540 the composition is skewed to low complexity; the sequence is SSSEEGSSSYQTTL.

This sequence belongs to the tyrosinase family. Cu(2+) serves as cofactor.

It localises to the melanosome membrane. The catalysed reaction is 2 L-dopa + O2 = 2 L-dopaquinone + 2 H2O. It catalyses the reaction L-tyrosine + O2 = L-dopaquinone + H2O. This is a copper-containing oxidase that functions in the formation of pigments such as melanins and other polyphenolic compounds. This is Tyrosinase (tyr) from Oryzias latipes (Japanese rice fish).